Consider the following 545-residue polypeptide: Hydroxylamine reductase (545 aa).

Residues Cys7, Cys10, Cys19, and Cys25 each contribute to the [4Fe-4S] cluster site. Positions 241, 265, 309, 400, 428, 453, 488, and 490 each coordinate hybrid [4Fe-2O-2S] cluster. Cys400 is modified (cysteine persulfide; in oxidized form).

The protein belongs to the HCP family. As to quaternary structure, monomer. It depends on [4Fe-4S] cluster as a cofactor. The cofactor is hybrid [4Fe-2O-2S] cluster.

The protein localises to the cytoplasm. It catalyses the reaction A + NH4(+) + H2O = hydroxylamine + AH2 + H(+). Its function is as follows. Catalyzes the reduction of hydroxylamine to form NH(3) and H(2)O. This Desulfovibrio desulfuricans (strain ATCC 27774 / DSM 6949 / MB) protein is Hydroxylamine reductase.